The following is a 133-amino-acid chain: ATP synthase epsilon chain, chloroplastic (133 aa).

It belongs to the ATPase epsilon chain family. As to quaternary structure, F-type ATPases have 2 components, CF(1) - the catalytic core - and CF(0) - the membrane proton channel. CF(1) has five subunits: alpha(3), beta(3), gamma(1), delta(1), epsilon(1). CF(0) has three main subunits: a, b and c.

It localises to the plastid. Its subcellular location is the chloroplast thylakoid membrane. Functionally, produces ATP from ADP in the presence of a proton gradient across the membrane. The chain is ATP synthase epsilon chain, chloroplastic from Daucus carota (Wild carrot).